The primary structure comprises 300 residues: Folate-binding protein 1 (300 aa).

Residues 1–28 form the signal peptide; the sequence is MGRCLTKKVFLIQSPILFLHLLISLSSG. 5 disulfide bridges follow: Cys38–Cys76, Cys68–Cys111, Cys77–Cys114, Cys102–Cys139, and Cys132–Cys178. N-linked (GlcNAc...) asparagine glycosylation is present at Asn173. Residues 238–258 traverse the membrane as a helical segment; it reads MTTIQKISLGMSFLIAGMFLI.

It belongs to the folate receptor family. As to expression, expressed in leaves.

Its subcellular location is the membrane. Folic acid-binding protein involved in salicylic acid- (SA-) induced folate accumulation by triggering uptake and accumulation of folic acid in cells. May be implicated in the transport of the folates from the site of production (leaves) to the site of storage (fruits and seeds) and utilization (roots). The polypeptide is Folate-binding protein 1 (Arabidopsis thaliana (Mouse-ear cress)).